A 201-amino-acid chain; its full sequence is Potassium-transporting ATPase KdpC subunit (201 aa).

Residues 7–29 (PALVLLTALTAITGLAYPLAMTG) traverse the membrane as a helical segment.

It belongs to the KdpC family. The system is composed of three essential subunits: KdpA, KdpB and KdpC.

Its subcellular location is the cell inner membrane. Functionally, part of the high-affinity ATP-driven potassium transport (or Kdp) system, which catalyzes the hydrolysis of ATP coupled with the electrogenic transport of potassium into the cytoplasm. This subunit acts as a catalytic chaperone that increases the ATP-binding affinity of the ATP-hydrolyzing subunit KdpB by the formation of a transient KdpB/KdpC/ATP ternary complex. In Methylorubrum populi (strain ATCC BAA-705 / NCIMB 13946 / BJ001) (Methylobacterium populi), this protein is Potassium-transporting ATPase KdpC subunit.